The primary structure comprises 409 residues: Mitochondrial inner membrane protein oxa1-2 (409 aa).

The helical transmembrane segment at 76–96 (VVYTPSLPLSSSVLASFSFLP) threads the bilayer. The Mitochondrial intermembrane segment spans residues 97-114 (HNILQNGLNTLHIWSGLP). The helical transmembrane segment at 115-135 (WWASIAACAVAMRIAVFPIML) threads the bilayer. Over 136-188 (KMMKTSAKLAIINPKVAEHMSVLSKAKAEGNSELMMQATTQIQNLYKVNNVNP) the chain is Mitochondrial matrix. The helical transmembrane segment at 189-209 (LNLLSAPVFQGILFISFFYAL) threads the bilayer. The Mitochondrial intermembrane segment spans residues 210 to 235 (KTMAGVPVEGFTDGGFWWVNDLSQPD). A helical membrane pass occupies residues 236-256 (PLHIFPVANGLLMLLNIELGS). The Mitochondrial matrix segment spans residues 257 to 275 (ETGSNKVAMSPSMKKFFRF). The helical transmembrane segment at 276–296 (LCLASPLFTMNFPMAIFMYWF) threads the bilayer. At 297 to 409 (PSNVFSVFQG…SVTKPTEKKD (113 aa)) the chain is on the mitochondrial intermembrane side. The segment at 369–409 (TDTNNEQKPTNNSTITKATTLSDNSQNDKSSSVTKPTEKKD) is disordered. Positions 374-403 (EQKPTNNSTITKATTLSDNSQNDKSSSVTK) are enriched in polar residues.

Belongs to the OXA1/ALB3/YidC family.

The protein resides in the mitochondrion inner membrane. Its function is as follows. Required for the insertion of integral membrane proteins into the mitochondrial inner membrane. Essential for the activity and assembly of cytochrome c oxidase. It is essential for viability while oxa101 is not. When both are deleted the cell is non-viable, suggesting that oxa101 act as a back-up for oxa102. The polypeptide is Mitochondrial inner membrane protein oxa1-2 (oxa102) (Schizosaccharomyces pombe (strain 972 / ATCC 24843) (Fission yeast)).